The following is a 349-amino-acid chain: Core protein VP7 (349 aa).

Asn45 is a glycosylation site (N-linked (GlcNAc...) asparagine; by host).

The protein belongs to the orbivirus VP7 family. In terms of assembly, homotrimer.

It localises to the virion. Functionally, major structural core protein; binds to structural protein VP3. Constitutes the surface of the AHSV core. This is Core protein VP7 (Segment-7) from African horse sickness virus 6 (AHSV-6).